The chain runs to 682 residues: Methionine--tRNA ligase (682 aa).

A 'HIGH' region motif is present at residues 14 to 24; it reads PYANGPVHLGH. Positions 145, 148, 158, and 161 each coordinate Zn(2+). The 'KMSKS' region motif lies at 331-335; it reads KMSKS. Lysine 334 lines the ATP pocket. Positions 580 to 682 constitute a tRNA-binding domain; that stretch reads AFAAVDLRVA…SGAKPGQRIK (103 aa).

The protein belongs to the class-I aminoacyl-tRNA synthetase family. MetG type 1 subfamily. In terms of assembly, homodimer. It depends on Zn(2+) as a cofactor.

The protein localises to the cytoplasm. It carries out the reaction tRNA(Met) + L-methionine + ATP = L-methionyl-tRNA(Met) + AMP + diphosphate. Is required not only for elongation of protein synthesis but also for the initiation of all mRNA translation through initiator tRNA(fMet) aminoacylation. The chain is Methionine--tRNA ligase from Pseudomonas syringae pv. tomato (strain ATCC BAA-871 / DC3000).